Consider the following 75-residue polypeptide: MIRSALDSKDLAKRGESLIRQSSNRYLTTVRIAFRAKQRRFDDFDGLLEESSVKPVQRAIIELSDEQDQPDLLPG.

This sequence belongs to the RNA polymerase subunit omega family. In cyanobacteria the RNAP catalytic core is composed of 2 alpha, 1 beta, 1 beta', 1 gamma and 1 omega subunit. When a sigma factor is associated with the core the holoenzyme is formed, which can initiate transcription.

It catalyses the reaction RNA(n) + a ribonucleoside 5'-triphosphate = RNA(n+1) + diphosphate. Promotes RNA polymerase assembly. Latches the N- and C-terminal regions of the beta' subunit thereby facilitating its interaction with the beta and alpha subunits. The protein is DNA-directed RNA polymerase subunit omega of Prochlorococcus marinus (strain MIT 9211).